Reading from the N-terminus, the 414-residue chain is Serine/threonine transporter SstT (414 aa).

The next 8 membrane-spanning stretches (helical) occupy residues 22–42, 54–74, 89–109, 148–168, 189–209, 223–243, 305–325, and 337–357; these read GLVLGIVVALISAPLQETIGF, IFVKALRAVAPILIFFLVMAA, IIVLYLLGTFLAAFVAVIAGF, AIFKANFIGVLAWSIGLGLAL, IVHVIISFAPFGVFGLVAETL, LLAVLIGTMLFTAFVVNPILV, MAGAAITITILTLAAVHTLGL, and IVAALCACGASGVAGGSLLLI.

Belongs to the dicarboxylate/amino acid:cation symporter (DAACS) (TC 2.A.23) family.

Its subcellular location is the cell inner membrane. The catalysed reaction is L-serine(in) + Na(+)(in) = L-serine(out) + Na(+)(out). It carries out the reaction L-threonine(in) + Na(+)(in) = L-threonine(out) + Na(+)(out). Involved in the import of serine and threonine into the cell, with the concomitant import of sodium (symport system). This is Serine/threonine transporter SstT from Haemophilus influenzae (strain PittGG).